We begin with the raw amino-acid sequence, 127 residues long: Large-conductance mechanosensitive channel (127 aa).

3 consecutive transmembrane segments (helical) span residues 9–29 (EFAM…GVAF), 32–52 (IVTA…LGGV), and 75–95 (VIDF…INLL).

The protein belongs to the MscL family. As to quaternary structure, homopentamer.

It is found in the cell inner membrane. In terms of biological role, channel that opens in response to stretch forces in the membrane lipid bilayer. May participate in the regulation of osmotic pressure changes within the cell. The protein is Large-conductance mechanosensitive channel of Legionella pneumophila (strain Corby).